A 316-amino-acid polypeptide reads, in one-letter code: Malate dehydrogenase (316 aa).

Residues 12 to 17 (GAGNIG) and Asp-36 contribute to the NAD(+) site. Positions 85 and 91 each coordinate substrate. NAD(+) contacts are provided by residues Asn-98 and 121–123 (VTN). Residues Asn-123 and Arg-154 each coordinate substrate. The Proton acceptor role is filled by His-178.

This sequence belongs to the LDH/MDH superfamily. MDH type 3 family.

It catalyses the reaction (S)-malate + NAD(+) = oxaloacetate + NADH + H(+). Catalyzes the reversible oxidation of malate to oxaloacetate. The chain is Malate dehydrogenase from Wolbachia sp. subsp. Brugia malayi (strain TRS).